A 623-amino-acid polypeptide reads, in one-letter code: Interleukin-27 receptor subunit alpha (623 aa).

The N-terminal stretch at 1–24 is a signal peptide; the sequence is MNRLRVARLTPLELLLSLMSLLLG. Topologically, residues 25-510 are extracellular; that stretch reads TRPHGSPGPL…HLPDNRIRWK (486 aa). 2 consecutive Fibronectin type-III domains span residues 30-124 and 125-225; these read SPGP…MKPD and TPQI…TPFL. Asn46 is a glycosylation site (N-linked (GlcNAc...) asparagine). The short motif at 211 to 215 is the WSXWS motif element; it reads WGEWS. 5 N-linked (GlcNAc...) asparagine glycosylation sites follow: Asn296, Asn305, Asn360, Asn368, and Asn461. 2 Fibronectin type-III domains span residues 316–412 and 413–505; these read APCD…VPLA and GPAV…LPDN. Residues 511–531 traverse the membrane as a helical segment; that stretch reads ALPWFLSLWGLLLMGCGLSLA. Residues 532 to 623 are Cytoplasmic-facing; sequence STRCLQARCL…PTPEELGLLV (92 aa). A Box 1 motif motif is present at residues 552–560; that stretch reads IWERVPDPA.

Belongs to the type I cytokine receptor family. Type 2 subfamily. Expressed in CD4+ and CD8+ T-cells, B-cells, natural killer cells and macrophages. Highest levels in CD4+ T-cells and natural killer cells. Expression highest in Th0 cells.

The protein localises to the membrane. In terms of biological role, receptor for IL27. Requires IL6ST/GP130 to mediate signal transduction in response to IL27. This signaling system acts through STAT3 and STAT1. Involved in the regulation of Th1-type immune responses. Also appears to be involved in innate defense mechanisms. The sequence is that of Interleukin-27 receptor subunit alpha (Il27ra) from Mus musculus (Mouse).